The primary structure comprises 469 residues: Ribulose bisphosphate carboxylase large chain (469 aa).

Lys5 is modified (N6,N6,N6-trimethyllysine). 2 residues coordinate substrate: Asn114 and Thr164. The active-site Proton acceptor is the Lys166. Lys168 contributes to the substrate binding site. Positions 192, 194, and 195 each coordinate Mg(2+). Lys192 carries the N6-carboxylysine modification. Catalysis depends on His285, which acts as the Proton acceptor. Substrate contacts are provided by Arg286, His318, and Ser370.

The protein belongs to the RuBisCO large chain family. Type I subfamily. As to quaternary structure, heterohexadecamer of 8 large chains and 8 small chains; disulfide-linked. The disulfide link is formed within the large subunit homodimers. Mg(2+) serves as cofactor. Post-translationally, the disulfide bond which can form in the large chain dimeric partners within the hexadecamer appears to be associated with oxidative stress and protein turnover.

It is found in the plastid. The protein localises to the chloroplast. The catalysed reaction is 2 (2R)-3-phosphoglycerate + 2 H(+) = D-ribulose 1,5-bisphosphate + CO2 + H2O. It catalyses the reaction D-ribulose 1,5-bisphosphate + O2 = 2-phosphoglycolate + (2R)-3-phosphoglycerate + 2 H(+). In terms of biological role, ruBisCO catalyzes two reactions: the carboxylation of D-ribulose 1,5-bisphosphate, the primary event in carbon dioxide fixation, as well as the oxidative fragmentation of the pentose substrate in the photorespiration process. Both reactions occur simultaneously and in competition at the same active site. This chain is Ribulose bisphosphate carboxylase large chain, found in Calycophyllum candidissimum (Degame lemonwood tree).